The primary structure comprises 309 residues: tRNA dimethylallyltransferase (309 aa).

10–17 serves as a coordination point for ATP; the sequence is GPTAVGKT. 12–17 provides a ligand contact to substrate; it reads TAVGKT. Residues 35 to 38 are interaction with substrate tRNA; the sequence is DSMQ.

Belongs to the IPP transferase family. As to quaternary structure, monomer. Requires Mg(2+) as cofactor.

It carries out the reaction adenosine(37) in tRNA + dimethylallyl diphosphate = N(6)-dimethylallyladenosine(37) in tRNA + diphosphate. Catalyzes the transfer of a dimethylallyl group onto the adenine at position 37 in tRNAs that read codons beginning with uridine, leading to the formation of N6-(dimethylallyl)adenosine (i(6)A). The sequence is that of tRNA dimethylallyltransferase from Clostridium botulinum (strain Eklund 17B / Type B).